The following is a 207-amino-acid chain: GILT-like protein 2 (207 aa).

The signal sequence occupies residues 1 to 19; sequence MRAAVFVCLLLGWVGVATP. The cysteines at positions 40 and 43 are disulfide-linked. Asparagine 182 carries N-linked (GlcNAc...) asparagine glycosylation.

Belongs to the GILT family.

It localises to the secreted. In terms of biological role, probable lysosomal thiol reductase that can reduce protein disulfide bonds. Involved in the immune response to bacterial infection. The protein is GILT-like protein 2 of Drosophila melanogaster (Fruit fly).